Reading from the N-terminus, the 239-residue chain is MSEAIKLFQYNTLGALMAGLYGGTLTVGELLEHGDLGLGTLDSIDGELIVLDGKAYQAKGSEGKVEVVEVSPDEKVPYAAVVPHQAEVIFRQRYEMTDKELEDRIESYYDGVNLFRSIKIKGHFKHMHVRMIPKSNADIKFADVATRQPEYEVDDISGTIVGIWTPEMFHGVSVAGYHLHFISDDLTFGGHVMDFVIENGIIEVGPVDQLDQRFPVQDRQYLFAKFNVDEMRKDITKAE.

The protein belongs to the alpha-acetolactate decarboxylase family.

The catalysed reaction is (2S)-2-acetolactate + H(+) = (R)-acetoin + CO2. It functions in the pathway polyol metabolism; (R,R)-butane-2,3-diol biosynthesis; (R,R)-butane-2,3-diol from pyruvate: step 2/3. Its activity is regulated as follows. The enzyme is active only in the presence of branched-chain amino acids. Valine results in much higher activation than leucine or isoleucine. Its function is as follows. Converts acetolactate into acetoin. Regulates leucine and valine biosynthesis by diverting the flux of alpha-acetolactate towards acetoin when the branched-chain amino acids are present in high concentration. The sequence is that of Alpha-acetolactate decarboxylase (aldC) from Streptococcus thermophilus.